A 93-amino-acid polypeptide reads, in one-letter code: Large ribosomal subunit protein uL23 (93 aa).

The protein belongs to the universal ribosomal protein uL23 family. In terms of assembly, part of the 50S ribosomal subunit. Contacts protein L29, and trigger factor when it is bound to the ribosome.

Its function is as follows. One of the early assembly proteins it binds 23S rRNA. One of the proteins that surrounds the polypeptide exit tunnel on the outside of the ribosome. Forms the main docking site for trigger factor binding to the ribosome. The protein is Large ribosomal subunit protein uL23 of Nautilia profundicola (strain ATCC BAA-1463 / DSM 18972 / AmH).